Here is a 107-residue protein sequence, read N- to C-terminus: Iron-sulfur cluster assembly protein CyaY (107 aa).

It belongs to the frataxin family.

In terms of biological role, involved in iron-sulfur (Fe-S) cluster assembly. May act as a regulator of Fe-S biogenesis. This Enterobacter sp. (strain 638) protein is Iron-sulfur cluster assembly protein CyaY.